An 875-amino-acid polypeptide reads, in one-letter code: MFFTISTHKMSSIADRNDGSIFDGLVEEDDKDKAKRVSRNKSEKKRRDQFNVLIKELGSMLPGNARKMDKSTVLQKSIDFLRKHKEITAQSDASEIRQDWKPTFLSNEEFTQLMLEALDGFFLAIMTDGNIIYVSESVTPLLEHLPSDLVDQSVFNFIPEGEHSEIYKILSSHLLESDSLTPEYLKSKNQLEFCCHMLRGTIDPKEQPTYEYVKFIGNFKCLNNVPNSAHNGFEGTIQRSHRPSYEDKVCFIATVRLATPQFIKEMCTVEEPNEEFTSRHSLEWKFLFLDHRAPPIIGYLPFEVLGTSGYDYYHVDDLDNLAKCHEHLMQYGKGKSCYYRFLTKGQQWIWLQTHYYITYHQWNSRPEFIVCTHTVVSYAEVRAERRRELGIEESLPEIKADKSQDSGSDNHINTVSLKEALERFDTSPTPSASSRSSRKSSHTAVSDHSSTPTKMTVDTSTPPRQSLSAHEKSTQRRSSLSSQSLSSQSLGQPVTQPTMSQPATLQLQSSMSQPVFQFSAQLGAMQHLKDQLEQRTRMIEANIHRQQEELRKIQEQLQIVHGQGLQLSSGPCVPKIHRTDVTVPEMFLQQSTSGLNFSSVQLTSGNSSSVQQLAPGNMQGQVVQTNQTQSGMNTGHTSTPHMIQQQPLQSSASQHNQQNVLSGHGQQSSLAGQSQNTVSTPLYNTMVISQPTAGNVVQVPSSLPQNNNQNAAAVTTFTQDRQIRFSQGQQLVTKLVTAPVACGAVMVPSTMFMGQVVTAYPTFAAQQQQPQTLPVTQQQQQQQQQSQQDQQQQQQQLTAVQQPAQPQLTQHPQQFLQTSRLLHGNQSAQLILSAAFPLQQSTFTQSHHQQHQPQQQQLSRHRTDKMTDPSKAQPQ.

Positions 32–47 (DKAKRVSRNKSEKKRR) match the Nuclear localization signal motif. Positions 34-84 (AKRVSRNKSEKKRRDQFNVLIKELGSMLPGNARKMDKSTVLQKSIDFLRKH) constitute a bHLH domain. A phosphoserine mark is found at Ser-38 and Ser-42. Residue Lys-67 forms a Glycyl lysine isopeptide (Lys-Gly) (interchain with G-Cter in SUMO1) linkage. PAS domains follow at residues 107-177 (NEEF…LLES) and 262-332 (FIKE…MQYG). Residues 336–379 (SCYYRFLTKGQQWIWLQTHYYITYHQWNSRPEFIVCTHTVVSYA) form the PAC domain. Ser-408 carries the phosphoserine modification. Positions 420 to 507 (ALERFDTSPT…TMSQPATLQL (88 aa)) are disordered. At Ser-427 the chain carries Phosphoserine; by GSK3-beta. Over residues 447–468 (DHSSTPTKMTVDTSTPPRQSLS) the composition is skewed to polar residues. A phosphothreonine; by CDK5 mark is found at Thr-451 and Thr-461. Residues 476–490 (RRSSLSSQSLSSQSL) are compositionally biased toward low complexity. Residues 491–507 (GQPVTQPTMSQPATLQL) show a composition bias toward polar residues. Residues 516–566 (FQFSAQLGAMQHLKDQLEQRTRMIEANIHRQQEELRKIQEQLQIVHGQGLQ) are implicated in the circadian rhythmicity. Disordered regions lie at residues 628-674 (TQSG…AGQS), 794-813 (QQQL…QHPQ), and 842-875 (TFTQ…AQPQ). The span at 842 to 857 (TFTQSHHQQHQPQQQQ) shows a compositional bias: low complexity. Lys-871 is covalently cross-linked (Glycyl lysine isopeptide (Lys-Gly) (interchain with G-Cter in SUMO1)).

As to quaternary structure, component of the circadian clock oscillator which includes the CRY proteins, CLOCK or NPAS2, BMAL1 or BMAL2, CSNK1D and/or CSNK1E, TIMELESS and the PER proteins. Forms a heterodimer with BMAL1. The CLOCK-BMAL1 heterodimer is required for E-box-dependent transactivation, for CLOCK nuclear translocation and degradation, and for phosphorylation of both CLOCK and BMAL1. Interaction with PER and CRY proteins requires translocation to the nucleus. Interaction of the CLOCK-BMAL1 heterodimer with PER or CRY inhibits transcription activation. Interacts with BMAL2. Post-translationally, ubiquitinated, leading to its proteasomal degradation. In terms of processing, O-glycosylated; contains O-GlcNAc. O-glycosylation by OGT prevents protein degradation by inhibiting ubiquitination. It also stabilizes the CLOCK-BMAL1 heterodimer thereby increasing CLOCK-BMAL1-mediated transcriptional activation of PER1/2/3 and CRY1/2. Phosphorylation is dependent on the CLOCK-BMAL1 heterodimer formation. Phosphorylation enhances the transcriptional activity, alters the subcellular localization and decreases the stability of the heterodimer by promoting its degradation. Post-translationally, sumoylation enhances its transcriptional activity and interaction with ESR1, resulting in up-regulation of ESR1 activity. Estrogen stimulates sumoylation. Desumoylation by SENP1 negatively regulates its transcriptional activity. In terms of processing, undergoes lysosome-mediated degradation in a time-dependent manner in the liver. In terms of tissue distribution, expressed in the retinal photoreceptor cells (at protein level). Isoform 1 is expressed in both the retina and pineal gland. Isoform 2 is expressed mainly in the pineal gland.

The protein localises to the cytoplasm. It localises to the nucleus. It is found in the cytosol. In terms of biological role, transcriptional activator which forms a core component of the circadian clock. The circadian clock, an internal time-keeping system, regulates various physiological processes through the generation of approximately 24 hour circadian rhythms in gene expression, which are translated into rhythms in metabolism and behavior. It is derived from the Latin roots 'circa' (about) and 'diem' (day) and acts as an important regulator of a wide array of physiological functions including metabolism, sleep, body temperature, blood pressure, endocrine, immune, cardiovascular, and renal function. Consists of two major components: the central clock, residing in the suprachiasmatic nucleus (SCN) of the brain, and the peripheral clocks that are present in nearly every tissue and organ system. Both the central and peripheral clocks can be reset by environmental cues, also known as Zeitgebers (German for 'timegivers'). The predominant Zeitgeber for the central clock is light, which is sensed by retina and signals directly to the SCN. The central clock entrains the peripheral clocks through neuronal and hormonal signals, body temperature and feeding-related cues, aligning all clocks with the external light/dark cycle. Circadian rhythms allow an organism to achieve temporal homeostasis with its environment at the molecular level by regulating gene expression to create a peak of protein expression once every 24 hours to control when a particular physiological process is most active with respect to the solar day. Transcription and translation of core clock components (CLOCK, NPAS2, BMAL1, BMAL2, PER1, PER2, PER3, CRY1 and CRY2) plays a critical role in rhythm generation, whereas delays imposed by post-translational modifications (PTMs) are important for determining the period (tau) of the rhythms (tau refers to the period of a rhythm and is the length, in time, of one complete cycle). A diurnal rhythm is synchronized with the day/night cycle, while the ultradian and infradian rhythms have a period shorter and longer than 24 hours, respectively. Disruptions in the circadian rhythms contribute to the pathology of cardiovascular diseases, cancer, metabolic syndromes and aging. A transcription/translation feedback loop (TTFL) forms the core of the molecular circadian clock mechanism. Transcription factors, CLOCK or NPAS2 and BMAL1 or BMAL2, form the positive limb of the feedback loop, act in the form of a heterodimer and activate the transcription of core clock genes and clock-controlled genes (involved in key metabolic processes), harboring E-box elements (5'-CACGTG-3') within their promoters. The core clock genes: PER1/2/3 and CRY1/2 which are transcriptional repressors form the negative limb of the feedback loop and interact with the CLOCK|NPAS2-BMAL1|BMAL2 heterodimer inhibiting its activity and thereby negatively regulating their own expression. This heterodimer also activates nuclear receptors NR1D1/2 and RORA/B/G, which form a second feedback loop and which activate and repress BMAL1 transcription, respectively. CLOCK regulates the circadian expression of AANAT in the retinal photoreceptor cells. The preferred binding motif for the CLOCK-BMAL1 heterodimer is 5'-CACGTGA-3', which contains a flanking adenine nucleotide at the 3-prime end of the canonical 6-nucleotide E-box sequence. CLOCK specifically binds to the half-site 5'-CAC-3', while BMAL1 binds to the half-site 5'-GTGA-3'. The polypeptide is Circadian locomoter output cycles protein kaput (CLOCK) (Gallus gallus (Chicken)).